The chain runs to 190 residues: Threonylcarbamoyl-AMP synthase (190 aa).

A YrdC-like domain is found at 9 to 190 (FLQLALARQT…IDIVTGQQFR (182 aa)).

It belongs to the SUA5 family. TsaC subfamily.

The protein localises to the cytoplasm. It catalyses the reaction L-threonine + hydrogencarbonate + ATP = L-threonylcarbamoyladenylate + diphosphate + H2O. In terms of biological role, required for the formation of a threonylcarbamoyl group on adenosine at position 37 (t(6)A37) in tRNAs that read codons beginning with adenine. Catalyzes the conversion of L-threonine, HCO(3)(-)/CO(2) and ATP to give threonylcarbamoyl-AMP (TC-AMP) as the acyladenylate intermediate, with the release of diphosphate. This is Threonylcarbamoyl-AMP synthase from Marinobacter nauticus (strain ATCC 700491 / DSM 11845 / VT8) (Marinobacter aquaeolei).